The chain runs to 368 residues: MLKRGRGRPGKRRRRVSIETSTCFRPACVKLGAGAGANLRQLASSRRPLRSWWVLYTIIMAAAGAPDGMEEPGMDTEAEAVATEAPARPLNCVEAEAAVGAAAEDSCDARGNLQPAPAQPPGDPAAQASVSNGEDAGGGVGKELVDLKIIWNKTKHDVKVPLDSTGSELKQKIHSITGLPPAMQKVMYKGLVPEDKTLREIKVTSGAKIMVVGSTINDVLAVNTPKDAAQQDAKAEENKKEPLCRQKQHRKVLDKGKPEDVMPSVKGAQERLPTVPLSGMYNKSGGKVRLTFKLEQDQLWIGTKERTEKLPMGSIKNVVSEPIEGHEDYHMMAFQLGPTEASYYWVYWVPTQYVDAIKDTVLGKWQYF.

The interval 106–139 is disordered; sequence SCDARGNLQPAPAQPPGDPAAQASVSNGEDAGGG. One can recognise a Ubiquitin-like domain in the interval 143–218; sequence ELVDLKIIWN…IMVVGSTIND (76 aa). Residues 231 to 263 are disordered; that stretch reads QDAKAEENKKEPLCRQKQHRKVLDKGKPEDVMP. 2 stretches are compositionally biased toward basic and acidic residues: residues 233–244 and 251–260; these read AKAEENKKEPLC and KVLDKGKPED.

This Mus musculus (Mouse) protein is Ubiquitin domain-containing protein UBFD1 (Ubfd1).